The primary structure comprises 426 residues: Cell adhesion molecule CEACAM16 (426 aa).

The signal sequence occupies residues 1–22; it reads MKMPLTWYSWFLLSAWILNTGA. An N-linked (GlcNAc...) asparagine glycan is attached at N38. A disordered region spans residues 77–96; sequence ETPGPAHTGREAVRPDGSLD. A compositionally biased stretch (basic and acidic residues) spans 84–95; that stretch reads TGREAVRPDGSL. Ig-like C2-type domains are found at residues 134 to 219 and 224 to 310; these read PPTV…LNLT and PERV…ASVV. A disulfide bond links C155 and C202. An N-linked (GlcNAc...) asparagine glycan is attached at N217. An intrachain disulfide couples C253 to C294.

The protein belongs to the immunoglobulin superfamily. CEA family. As to quaternary structure, homooligomer; can for homodimers and homotetramers. Interacts with TECTA and TECTB. In terms of tissue distribution, expressed in cochlear outer hair cells (OHC).

Its subcellular location is the secreted. Functionally, required for proper hearing, plays a role in maintaining the integrity of the tectorial membrane. The polypeptide is Cell adhesion molecule CEACAM16 (Mus musculus (Mouse)).